A 233-amino-acid polypeptide reads, in one-letter code: 7-cyano-7-deazaguanine synthase (233 aa).

7–17 provides a ligand contact to ATP; the sequence is LSGGLDSAVTS. Residues Cys195, Cys206, Cys209, and Cys212 each contribute to the Zn(2+) site.

It belongs to the QueC family. It depends on Zn(2+) as a cofactor.

It carries out the reaction 7-carboxy-7-deazaguanine + NH4(+) + ATP = 7-cyano-7-deazaguanine + ADP + phosphate + H2O + H(+). It participates in purine metabolism; 7-cyano-7-deazaguanine biosynthesis. Its function is as follows. Catalyzes the ATP-dependent conversion of 7-carboxy-7-deazaguanine (CDG) to 7-cyano-7-deazaguanine (preQ(0)). This chain is 7-cyano-7-deazaguanine synthase, found in Methanococcus maripaludis (strain C5 / ATCC BAA-1333).